We begin with the raw amino-acid sequence, 200 residues long: LPICANGSTNCHQIPLDDLFERVVKLAHRIHSLTSDMFNEFDERYAQGRGFISRAINNCHTSSLTTPEDKEQAQKFHHDDLLRLVMKVLRSWNDPLLQLVSEVPQGIGEAPGTILWKVTEVEDQTKQLIEGMEKILGRMHPNGLDNEVLSLWPMPMAMHAGDGSKLFAFYNLLHCFRRDSFKIDSYLKLLRCRLFHEGGC.

3 disulfide bridges follow: C4–C11, C59–C175, and C192–C200.

This sequence belongs to the somatotropin/prolactin family. Pituitary gland.

Its subcellular location is the secreted. The sequence is that of Prolactin (prl) from Protopterus aethiopicus (Marbled lungfish).